Consider the following 237-residue polypeptide: Ig heavy chain Mem5 (237 aa).

2 consecutive Ig-like domains span residues 1–119 (EVKL…LTVS) and 126–218 (PSVY…KKIE). Residues Cys22 and Cys98 are joined by a disulfide bond. Residues 101-105 (VDYGT) are d segment. The interval 106–120 (NYDYWGQGTTLTVSS) is JH2 segment. A disulfide bond links Cys147 and Cys202.

The protein resides in the secreted. Its function is as follows. Anti-influenza H3N2 neuraminidase antibody. This is Ig heavy chain Mem5 from Mus musculus (Mouse).